The chain runs to 372 residues: UDP-N-acetylenolpyruvoylglucosamine reductase (372 aa).

Residues Val29–Ser205 form the FAD-binding PCMH-type domain. Arg177 is a catalytic residue. Ser260 acts as the Proton donor in catalysis. Residue Glu364 is part of the active site.

It belongs to the MurB family. Requires FAD as cofactor.

It is found in the cytoplasm. The catalysed reaction is UDP-N-acetyl-alpha-D-muramate + NADP(+) = UDP-N-acetyl-3-O-(1-carboxyvinyl)-alpha-D-glucosamine + NADPH + H(+). The protein operates within cell wall biogenesis; peptidoglycan biosynthesis. In terms of biological role, cell wall formation. The sequence is that of UDP-N-acetylenolpyruvoylglucosamine reductase from Mycobacterium avium (strain 104).